A 48-amino-acid polypeptide reads, in one-letter code: MFKRKSTAELAAQMAKLNGNKGFSSEDKGEWKLKLDNAGNGQAVIRFL.

As to quaternary structure, homodimer in the absence of DNA, monomer when binding DNA.

In terms of biological role, binds preferentially to single-stranded DNA and therefore, destabilizes double-stranded DNA. It is involved in DNA replication, repair and recombination. Binds ss-DNA as the replication fork advances and stimulates the replisome processivity and accuracy. This is Single-stranded DNA-binding protein (32) from Enterobacteria phage FSalpha (Bacteriophage FS-alpha).